Here is a 537-residue protein sequence, read N- to C-terminus: Cytochrome P450 CYP12A2 (537 aa).

Residue Cys483 participates in heme binding.

It belongs to the cytochrome P450 family. The cofactor is heme.

This Musca domestica (House fly) protein is Cytochrome P450 CYP12A2 (CYP12A2).